We begin with the raw amino-acid sequence, 874 residues long: Alanine--tRNA ligase (874 aa).

The Zn(2+) site is built by H562, H566, C664, and H668.

Belongs to the class-II aminoacyl-tRNA synthetase family. Zn(2+) serves as cofactor.

The protein resides in the cytoplasm. It catalyses the reaction tRNA(Ala) + L-alanine + ATP = L-alanyl-tRNA(Ala) + AMP + diphosphate. Functionally, catalyzes the attachment of alanine to tRNA(Ala) in a two-step reaction: alanine is first activated by ATP to form Ala-AMP and then transferred to the acceptor end of tRNA(Ala). Also edits incorrectly charged Ser-tRNA(Ala) and Gly-tRNA(Ala) via its editing domain. This chain is Alanine--tRNA ligase, found in Neisseria meningitidis serogroup B (strain ATCC BAA-335 / MC58).